A 358-amino-acid polypeptide reads, in one-letter code: Probable translocation protein Y4yK (358 aa).

This sequence belongs to the FliN/MopA/SpaO family.

In terms of biological role, could be involved in the secretion of an unknown factor. The polypeptide is Probable translocation protein Y4yK (Sinorhizobium fredii (strain NBRC 101917 / NGR234)).